The sequence spans 215 residues: Pyrophosphate-energized proton pump 2 (215 aa).

5 helical membrane passes run 16 to 36 (VYPL…TFFV), 51 to 71 (GLIA…YATV), 86 to 106 (GTNL…IVVI), 136 to 156 (GLAV…GGII), and 164 to 184 (LFGT…IVAL).

It belongs to the H(+)-translocating pyrophosphatase (TC 3.A.10) family. In terms of assembly, homodimer. Mg(2+) is required as a cofactor.

It localises to the cell inner membrane. The catalysed reaction is diphosphate + H2O + H(+)(in) = 2 phosphate + 2 H(+)(out). Functionally, proton pump that utilizes the energy of pyrophosphate hydrolysis as the driving force for proton movement across the membrane. Generates a proton motive force. The polypeptide is Pyrophosphate-energized proton pump 2 (hppA2) (Rhizobium leguminosarum bv. trifolii).